Consider the following 493-residue polypeptide: Betaine aldehyde dehydrogenase (493 aa).

Positions 32, 33, and 99 each coordinate K(+). Position 156 to 158 (156 to 158 (GAW)) interacts with NAD(+). The active-site Charge relay system is the K168. NAD(+)-binding positions include 182–185 (KPSE) and 235–238 (SVPT). L250 serves as a coordination point for K(+). The active-site Proton acceptor is the E256. 3 residues coordinate NAD(+): G258, C290, and E390. C290 functions as the Nucleophile in the catalytic mechanism. C290 carries the post-translational modification Cysteine sulfenic acid (-SOH). The K(+) site is built by K460 and G463. E467 (charge relay system) is an active-site residue.

Belongs to the aldehyde dehydrogenase family. In terms of assembly, dimer of dimers. The cofactor is K(+).

The catalysed reaction is betaine aldehyde + NAD(+) + H2O = glycine betaine + NADH + 2 H(+). It participates in amine and polyamine biosynthesis; betaine biosynthesis via choline pathway; betaine from betaine aldehyde: step 1/1. Functionally, involved in the biosynthesis of the osmoprotectant glycine betaine. Catalyzes the irreversible oxidation of betaine aldehyde to the corresponding acid. This is Betaine aldehyde dehydrogenase from Agrobacterium fabrum (strain C58 / ATCC 33970) (Agrobacterium tumefaciens (strain C58)).